Consider the following 214-residue polypeptide: Coiled-coil domain-containing protein 169 (214 aa).

The stretch at 56–138 (SEWKTRYETQ…YAFRLEQESK (83 aa)) forms a coiled coil. The disordered stretch occupies residues 154–214 (MTQVSGSNQV…RSNHLPKLNP (61 aa)). 2 stretches are compositionally biased toward polar residues: residues 155 to 166 (TQVSGSNQVSKR) and 185 to 195 (HNSMNQKTTNA).

It belongs to the CCDC169 family.

The sequence is that of Coiled-coil domain-containing protein 169 (Ccdc169) from Mus musculus (Mouse).